Reading from the N-terminus, the 241-residue chain is LAS seventeen-binding protein 1 (241 aa).

Serine 2 carries the post-translational modification N-acetylserine. A Glycyl lysine isopeptide (Lys-Gly) (interchain with G-Cter in ubiquitin) cross-link involves residue lysine 41. Residue serine 48 is modified to Phosphoserine. Residues 53–112 enclose the SH3 domain; sequence DTEEYVEALYDFEAQQDGDLSLKTGDKIQVLEKISPDWYRGKSNNKIGIFPANYVKPAFT. Lysine 79 participates in a covalent cross-link: Glycyl lysine isopeptide (Lys-Gly) (interchain with G-Cter in ubiquitin). 2 positions are modified to phosphoserine: serine 114 and serine 116. Lysine 118 is covalently cross-linked (Glycyl lysine isopeptide (Lys-Gly) (interchain with G-Cter in ubiquitin)). The span at 118–131 shows a compositional bias: low complexity; it reads KSAEAASSSTVSRP. Residues 118-213 form a disordered region; it reads KSAEAASSST…QQSSGASSAF (96 aa). Positions 135–138 match the PY motif motif; that stretch reads PPSY. Over residues 163–179 the composition is skewed to pro residues; the sequence is APPPQQQQAPLPYPPPF. Residues 180 to 213 are compositionally biased toward low complexity; sequence TNYYQQPQQQYAPPSQQAPVEAQPQQSSGASSAF. A Glycyl lysine isopeptide (Lys-Gly) (interchain with G-Cter in ubiquitin) cross-link involves residue lysine 219.

It belongs to the LSB1 family. Interacts with LAS17, RSP5 and SUP35. In terms of processing, ubiquitinated by RSP5.

It localises to the cytoplasm. Its subcellular location is the nucleus. The protein resides in the cytoskeleton. It is found in the actin patch. Its function is as follows. Involved in resistance to EDTA. The polypeptide is LAS seventeen-binding protein 1 (LSB1) (Saccharomyces cerevisiae (strain ATCC 204508 / S288c) (Baker's yeast)).